A 335-amino-acid chain; its full sequence is N-acetyl-gamma-glutamyl-phosphate reductase (335 aa).

C156 is a catalytic residue.

This sequence belongs to the NAGSA dehydrogenase family. Type 1 subfamily.

It localises to the cytoplasm. The catalysed reaction is N-acetyl-L-glutamate 5-semialdehyde + phosphate + NADP(+) = N-acetyl-L-glutamyl 5-phosphate + NADPH + H(+). It functions in the pathway amino-acid biosynthesis; L-arginine biosynthesis; N(2)-acetyl-L-ornithine from L-glutamate: step 3/4. Functionally, catalyzes the NADPH-dependent reduction of N-acetyl-5-glutamyl phosphate to yield N-acetyl-L-glutamate 5-semialdehyde. The polypeptide is N-acetyl-gamma-glutamyl-phosphate reductase (Aeromonas salmonicida (strain A449)).